A 274-amino-acid polypeptide reads, in one-letter code: Large ribosomal subunit protein uL2 (274 aa).

Disordered stretches follow at residues 28-54 and 224-274; these read APHA…TRHI and VAMN…RRRK. The span at 263–274 shows a compositional bias: basic and acidic residues; sequence KRTDKMIVRRRK.

The protein belongs to the universal ribosomal protein uL2 family. As to quaternary structure, part of the 50S ribosomal subunit. Forms a bridge to the 30S subunit in the 70S ribosome.

Functionally, one of the primary rRNA binding proteins. Required for association of the 30S and 50S subunits to form the 70S ribosome, for tRNA binding and peptide bond formation. It has been suggested to have peptidyltransferase activity; this is somewhat controversial. Makes several contacts with the 16S rRNA in the 70S ribosome. In Pseudomonas fluorescens (strain SBW25), this protein is Large ribosomal subunit protein uL2.